The chain runs to 82 residues: Small ribosomal subunit protein bS18 (82 aa).

Residues 1 to 10 (MTDTNQNSSR) show a composition bias toward polar residues. A disordered region spans residues 1–21 (MTDTNQNSSRRPFHRRRKTCP).

It belongs to the bacterial ribosomal protein bS18 family. In terms of assembly, part of the 30S ribosomal subunit. Forms a tight heterodimer with protein bS6.

Functionally, binds as a heterodimer with protein bS6 to the central domain of the 16S rRNA, where it helps stabilize the platform of the 30S subunit. This chain is Small ribosomal subunit protein bS18, found in Bartonella tribocorum (strain CIP 105476 / IBS 506).